The chain runs to 331 residues: 6-phosphogluconolactonase (331 aa).

It belongs to the cycloisomerase 2 family.

The catalysed reaction is 6-phospho-D-glucono-1,5-lactone + H2O = 6-phospho-D-gluconate + H(+). It functions in the pathway carbohydrate degradation; pentose phosphate pathway; D-ribulose 5-phosphate from D-glucose 6-phosphate (oxidative stage): step 2/3. Functionally, catalyzes the hydrolysis of 6-phosphogluconolactone to 6-phosphogluconate. The protein is 6-phosphogluconolactonase of Salmonella arizonae (strain ATCC BAA-731 / CDC346-86 / RSK2980).